A 148-amino-acid chain; its full sequence is MMTQFWITTPLEKMTPEQWESLCDGCGKCCLNKIIDDETDELYYTNAACHLLDNDTCGCRRYPNRFTYVPECTSITPENIAELTWLPDSCAYRRLHVGKGLPSWHPLLTGNKEAMHAAGISVQGKTVNEMKVKYLEDCIVLWPMLDVE.

This sequence belongs to the UPF0260 family.

The chain is UPF0260 protein Sfri_1740 from Shewanella frigidimarina (strain NCIMB 400).